We begin with the raw amino-acid sequence, 275 residues long: 2,3,4,5-tetrahydropyridine-2,6-dicarboxylate N-succinyltransferase (275 aa).

Substrate contacts are provided by Arg108 and Asp145.

This sequence belongs to the transferase hexapeptide repeat family. As to quaternary structure, homotrimer.

The protein localises to the cytoplasm. The enzyme catalyses (S)-2,3,4,5-tetrahydrodipicolinate + succinyl-CoA + H2O = (S)-2-succinylamino-6-oxoheptanedioate + CoA. It functions in the pathway amino-acid biosynthesis; L-lysine biosynthesis via DAP pathway; LL-2,6-diaminopimelate from (S)-tetrahydrodipicolinate (succinylase route): step 1/3. The sequence is that of 2,3,4,5-tetrahydropyridine-2,6-dicarboxylate N-succinyltransferase from Jannaschia sp. (strain CCS1).